A 468-amino-acid chain; its full sequence is Transmembrane protein 151B (468 aa).

The tract at residues 1–25 is disordered; that stretch reads MPEDGGGDSGDVPEIIPDGEPLREE. A run of 2 helical transmembrane segments spans residues 45–65 and 98–118; these read CLLL…CRLA and YLYI…AECW. The interval 384 to 438 is disordered; sequence VSSNSLPPARPSGPRLPFSRSRLSLGAGGRATPGVFRSLSGGPLGRRGEDTEPLE.

This sequence belongs to the TMEM151 family.

Its subcellular location is the membrane. The chain is Transmembrane protein 151B (TMEM151B) from Bos taurus (Bovine).